The sequence spans 127 residues: Apolipoprotein C-IV (127 aa).

The signal sequence occupies residues Met1 to Cys27. Asn63 is a glycosylation site (N-linked (GlcNAc...) asparagine).

Belongs to the apolipoprotein C4 family.

The protein localises to the secreted. In terms of biological role, may participate in lipoprotein metabolism. The chain is Apolipoprotein C-IV (APOC4) from Colobus guereza (Mantled guereza).